The sequence spans 999 residues: Golgin subfamily A member 2 (999 aa).

Pro residues predominate over residues 1–11 (MWPPRFPPPRP). Disordered regions lie at residues 1–80 (MWPP…PAPP) and 244–288 (ARQK…YNKD). The segment at 1–86 (MWPPRFPPPR…PAPPTAATDT (86 aa)) is interaction with p115/USO1. Dimethylated arginine is present on residues Arg-18 and Arg-30. The short motif at 26–49 (KKKLREYQQKNSPGVPAGAKKKKK) is the Nuclear localization signal element. 4 positions are modified to phosphoserine: Ser-37, Ser-66, Ser-273, and Ser-438. The stretch at 147-895 (LTSSNMKELE…VLRLVNERNE (749 aa)) forms a coiled coil. Polar residues predominate over residues 271-280 (TLSTVSTQQK). Residues 444–468 (SQMEEPPPPEPPAGPSEAEEQLQGE) are disordered. Positions 448 to 457 (EPPPPEPPAG) are enriched in pro residues. Phosphoserine occurs at positions 697, 934, and 978. Positions 989–999 (DENDEVKIMVV) are interaction with GORASP1/GRASP65.

The protein belongs to the GOLGA2 family. Homodimer, may assemble into homohexamers. Homotetramer; forms a parallel homotetramer with a flexible rod-like structure that can give rise to I- and Y-shaped conformations. Interacts with GORASP1/GRASP65. The homooligomer forms a complex with GORASP1 with a 1:1 stoichiometry. Interacts with RAB1B that has been activated by GTP-binding. Interacts with p115/USO1; interaction with p115/USO1 inhibits interaction with STX5 and/or RAB1B. Interacts with STX5. Interacts with ZFPL1. Interacts with AKAP450/AKAP9; leading to recruit AKAP450/AKAP9 to the cis-Golgi. Post-translationally, phosphorylated at Ser-37 by CDK1 at the onset of mitosis, inhibiting the interaction with p115/USO1 and triggering Golgi disassembly. A report however suggests that Golgi disassembly is independent of phosphorylation at Ser-37. Phosphorylated at Ser-37 in prophase as the Golgi complex starts to break down, and remains phosphorylated during further breakdown and partitioning of the Golgi fragments in metaphase and anaphase. In telophase, GM130 is dephosphorylated by PP2A as the Golgi fragments start to reassemble. In terms of processing, cleaved by caspases at the onset of apoptosis. Methylation by PRMT5 is required for Golgi ribbon formation. In terms of tissue distribution, widely expressed. Detected in brain, kidney, lung, liver, spleen, heart, skeletal muscle, thymus and pancreas. Detected in spermatocytes. Present in oocytes during all oocyte meiotic maturation (at protein level).

The protein resides in the golgi apparatus. The protein localises to the cis-Golgi network membrane. Its subcellular location is the endoplasmic reticulum-Golgi intermediate compartment membrane. It localises to the cytoplasm. It is found in the cytoskeleton. The protein resides in the spindle pole. Peripheral membrane component of the cis-Golgi stack that acts as a membrane skeleton that maintains the structure of the Golgi apparatus, and as a vesicle thether that facilitates vesicle fusion to the Golgi membrane. Required for normal protein transport from the endoplasmic reticulum to the Golgi apparatus and the cell membrane. Together with p115/USO1 and STX5, involved in vesicle tethering and fusion at the cis-Golgi membrane to maintain the stacked and inter-connected structure of the Golgi apparatus. Plays a central role in mitotic Golgi disassembly: phosphorylation at Ser-37 by CDK1 at the onset of mitosis inhibits the interaction with p115/USO1, preventing tethering of COPI vesicles and thereby inhibiting transport through the Golgi apparatus during mitosis. Also plays a key role in spindle pole assembly and centrosome organization. Promotes the mitotic spindle pole assembly by activating the spindle assembly factor TPX2 to nucleate microtubules around the Golgi and capture them to couple mitotic membranes to the spindle: upon phosphorylation at the onset of mitosis, GOLGA2 interacts with importin-alpha via the nuclear localization signal region, leading to recruit importin-alpha to the Golgi membranes and liberate the spindle assembly factor TPX2 from importin-alpha. TPX2 then activates AURKA kinase and stimulates local microtubule nucleation. Upon filament assembly, nascent microtubules are further captured by GOLGA2, thus linking Golgi membranes to the spindle. Regulates the meiotic spindle pole assembly, probably via the same mechanism. Also regulates the centrosome organization. Also required for the Golgi ribbon formation and glycosylation of membrane and secretory proteins. This Mus musculus (Mouse) protein is Golgin subfamily A member 2 (Golga2).